A 258-amino-acid chain; its full sequence is Thiamine thiazole synthase (258 aa).

Residues alanine 36, 55-56, glycine 63, valine 127, and 154-156 each bind NAD(+); these read EK and HVD. Residues aspartate 156 and histidine 171 each coordinate Fe cation. Residue methionine 224 participates in NAD(+) binding. Position 234 (arginine 234) interacts with glycine.

This sequence belongs to the THI4 family. In terms of assembly, homooctamer; tetramer of dimers. The cofactor is Fe(2+).

It catalyses the reaction hydrogen sulfide + glycine + NAD(+) = ADP-5-ethyl-4-methylthiazole-2-carboxylate + nicotinamide + 3 H2O + H(+). It functions in the pathway cofactor biosynthesis; thiamine diphosphate biosynthesis. Involved in the biosynthesis of the thiazole moiety of thiamine. Catalyzes the conversion of NAD and glycine to adenosine diphosphate 5-(2-hydroxyethyl)-4-methylthiazole-2-carboxylate (ADT), an adenylated thiazole intermediate, using free sulfide as a source of sulfur. This chain is Thiamine thiazole synthase, found in Methanococcoides burtonii (strain DSM 6242 / NBRC 107633 / OCM 468 / ACE-M).